A 188-amino-acid chain; its full sequence is Gag polyprotein (188 aa).

Positions 77–90 (VGETTVQRDAKMAP) are enriched in basic and acidic residues. A disordered region spans residues 77–99 (VGETTVQRDAKMAPEETATPKTV). The PPXY motif signature appears at 121–124 (PPPY). The tract at residues 130–166 (YPSLAGVGEQQGQGGDTPRGAEQPRAEPGHAGLAPGP) is disordered.

Specific enzymatic cleavages in vivo yield mature proteins.

Its subcellular location is the virion. In Galliformes (EV-2), this protein is Gag polyprotein (ev-2).